Reading from the N-terminus, the 228-residue chain is Endonuclease V (228 aa).

Residues D43 and D109 each coordinate Mg(2+).

This sequence belongs to the endonuclease V family. Mg(2+) serves as cofactor.

The protein resides in the cytoplasm. It catalyses the reaction Endonucleolytic cleavage at apurinic or apyrimidinic sites to products with a 5'-phosphate.. Its function is as follows. DNA repair enzyme involved in the repair of deaminated bases. Selectively cleaves double-stranded DNA at the second phosphodiester bond 3' to a deoxyinosine leaving behind the intact lesion on the nicked DNA. This is Endonuclease V from Dictyoglomus turgidum (strain DSM 6724 / Z-1310).